The primary structure comprises 364 residues: MNFTVGFKPLLGDAHNMDNLEKQLICPICLEMFSKPVVILPCQHNLCRKCANDVFQASNPLWQSRGSTTVSSGGRFRCPSCRHEVVLDRHGVYGLQRNLLVENIIDIYKQESSRPLHSKAEQHLMCEEHEDEKINIYCLSCEVPTCSLCKVFGAHKDCEVAPLPTIYKRQKSELSDGIAMLVAGNDRVQAVITQMEEVCQTIEDNSRRQKQLLNQKFETLCAVLEERKGELLQALARVQEEKLQRVRSLIRQYGDHLEASSKLVESAIQSMEEPQMALYLQQAKELINKVGAMSKVELAGRPEPGYESMEQFSVIVEHVAEMLRTIDFQPGASGDEEDDEVTLDGEEGNTGLEEERLDGPEGLH.

An RING-type zinc finger spans residues C26–R82. Residues E121–L163 form a B box-type zinc finger. 4 residues coordinate Zn(2+): C126, H129, C149, and H155. Positions K168–Q211 are mediates microtubule-binding and homooligomerization. A coiled-coil region spans residues Q194–Q252. The COS domain maps to M271–Q329. Positions F328 to H364 are disordered. The segment covering G334–E347 has biased composition (acidic residues). Basic and acidic residues predominate over residues E353–H364.

As to quaternary structure, homooligomer and heterooligomer. Interacts with TRIM63 and probably with TRIM55. Interacts with tubulin.

The protein resides in the cytoplasm. It localises to the cytoskeleton. Its subcellular location is the myofibril. The protein localises to the sarcomere. It is found in the z line. In terms of biological role, may bind and stabilize microtubules during myotubes formation. This Rattus norvegicus (Rat) protein is Tripartite motif-containing protein 54 (Trim54).